Reading from the N-terminus, the 288-residue chain is Pyridoxal kinase PdxY (288 aa).

Substrate is bound by residues Ser9 and 44–45; that span reads TQ. ATP is bound by residues Asp111, Glu148, and Lys181. Asp224 is a substrate binding site.

Belongs to the pyridoxine kinase family. PdxY subfamily. In terms of assembly, homodimer. Requires Mg(2+) as cofactor.

It carries out the reaction pyridoxal + ATP = pyridoxal 5'-phosphate + ADP + H(+). Its pathway is cofactor metabolism; pyridoxal 5'-phosphate salvage; pyridoxal 5'-phosphate from pyridoxal: step 1/1. Its function is as follows. Pyridoxal kinase involved in the salvage pathway of pyridoxal 5'-phosphate (PLP). Catalyzes the phosphorylation of pyridoxal to PLP. The protein is Pyridoxal kinase PdxY of Haemophilus influenzae (strain ATCC 51907 / DSM 11121 / KW20 / Rd).